We begin with the raw amino-acid sequence, 204 residues long: Imidazole glycerol phosphate synthase subunit HisH (204 aa).

The Glutamine amidotransferase type-1 domain occupies 5 to 204; that stretch reads KVVIIDTGCA…AKLIQNFLEL (200 aa). The Nucleophile role is filled by Cys-80. Residues His-186 and Glu-188 contribute to the active site.

As to quaternary structure, heterodimer of HisH and HisF.

The protein resides in the cytoplasm. It catalyses the reaction 5-[(5-phospho-1-deoxy-D-ribulos-1-ylimino)methylamino]-1-(5-phospho-beta-D-ribosyl)imidazole-4-carboxamide + L-glutamine = D-erythro-1-(imidazol-4-yl)glycerol 3-phosphate + 5-amino-1-(5-phospho-beta-D-ribosyl)imidazole-4-carboxamide + L-glutamate + H(+). The catalysed reaction is L-glutamine + H2O = L-glutamate + NH4(+). It functions in the pathway amino-acid biosynthesis; L-histidine biosynthesis; L-histidine from 5-phospho-alpha-D-ribose 1-diphosphate: step 5/9. Functionally, IGPS catalyzes the conversion of PRFAR and glutamine to IGP, AICAR and glutamate. The HisH subunit catalyzes the hydrolysis of glutamine to glutamate and ammonia as part of the synthesis of IGP and AICAR. The resulting ammonia molecule is channeled to the active site of HisF. This Vibrio parahaemolyticus serotype O3:K6 (strain RIMD 2210633) protein is Imidazole glycerol phosphate synthase subunit HisH.